A 199-amino-acid polypeptide reads, in one-letter code: MKLLIDFFPIILFFVAFKVWGIYTATAVAIVATIAQIAYLRVRHGKVEPMQWVSLGVIVLFGGATLLAHNDTFIKWKPSVLYWLMGSALLIGQLVFRKNLLRSVMGAQLQLPDNAWRTLNWSWAAFFAVMGALNLVIAYRFDTDTWVNFKLFGGMGLMLVFVIGQAIYMSRFMQEDKGEAAAATPDALPPPGVQQDKQP.

5 helical membrane-spanning segments follow: residues 3-23 (LLID…WGIY), 47-67 (VEPM…ATLL), 76-96 (WKPS…QLVF), 119-139 (LNWS…VIAY), and 149-169 (FKLF…AIYM). The segment at 180 to 199 (AAAATPDALPPPGVQQDKQP) is disordered.

The protein belongs to the YciB family.

It is found in the cell inner membrane. Plays a role in cell envelope biogenesis, maintenance of cell envelope integrity and membrane homeostasis. This Delftia acidovorans (strain DSM 14801 / SPH-1) protein is Inner membrane-spanning protein YciB.